Reading from the N-terminus, the 49-residue chain is Large ribosomal subunit protein eL40 (49 aa).

The protein belongs to the eukaryotic ribosomal protein eL40 family.

The sequence is that of Large ribosomal subunit protein eL40 from Archaeoglobus fulgidus (strain ATCC 49558 / DSM 4304 / JCM 9628 / NBRC 100126 / VC-16).